Here is a 331-residue protein sequence, read N- to C-terminus: 3'-5' exonuclease (331 aa).

Residues 27–92 (ERVKQTNAAK…EDGPASPEKE (66 aa)) are disordered. Residues 31 to 43 (QTNAAKKQIATNN) show a composition bias toward polar residues. Positions 47-67 (KNQDTPEMIKDKENAESENPP) are enriched in basic and acidic residues. Ser-80 and Ser-88 each carry phosphoserine. Residues 118 to 290 (SADEVMQWVE…IGQVIYREIE (173 aa)) enclose the 3'-5' exonuclease domain. Mg(2+) contacts are provided by Asp-140, Glu-142, and Asp-278.

Belongs to the WRNexo family.

The protein resides in the nucleus. In terms of biological role, has exonuclease activity on both single-stranded and duplex templates bearing overhangs, but not blunt ended duplex DNA, and cleaves in a 3'-5' direction. Essential for the formation of DNA replication focal centers. Has an important role in maintaining genome stability. In Drosophila grimshawi (Hawaiian fruit fly), this protein is 3'-5' exonuclease.